The following is a 214-amino-acid chain: Large ribosomal subunit protein uL16 (214 aa).

Position 32 is a citrulline (Arg32). Lys175 participates in a covalent cross-link: Glycyl lysine isopeptide (Lys-Gly) (interchain with G-Cter in SUMO2). Residue Lys188 forms a Glycyl lysine isopeptide (Lys-Gly) (interchain with G-Cter in ubiquitin) linkage.

The protein belongs to the universal ribosomal protein uL16 family. Component of the large ribosomal subunit. Mature ribosomes consist of a small (40S) and a large (60S) subunit. The 40S subunit contains about 33 different proteins and 1 molecule of RNA (18S). The 60S subunit contains about 49 different proteins and 3 molecules of RNA (28S, 5.8S and 5S). Post-translationally, citrullinated by PADI4. Ufmylated by UFL1.

It localises to the cytoplasm. Its function is as follows. Component of the large ribosomal subunit. Plays a role in the formation of actively translating ribosomes. May play a role in the embryonic brain development. This chain is Large ribosomal subunit protein uL16, found in Pongo abelii (Sumatran orangutan).